The sequence spans 327 residues: Gamma-resorcylate decarboxylase (327 aa).

E8, H10, H164, and D287 together coordinate Zn(2+). D287 is a catalytic residue.

This sequence belongs to the metallo-dependent hydrolases superfamily. ACMSD family. Homotetramer. Zn(2+) is required as a cofactor.

The catalysed reaction is 2,6-dihydroxybenzoate + H(+) = resorcinol + CO2. It carries out the reaction 2,3-dihydroxybenzoate + H(+) = catechol + CO2. Its pathway is aromatic compound metabolism. Insensitive to oxygen. Decarboxylation and carboxylation are inhibited by AgNO(3) and by diethyl pyrocarbonate, a histidine residue-specific inhibitor. Decarboxylation is also inhibited by HgCl(2) and activated by MgCl(2). Functionally, involved in the gamma-resorcylate (2,6-dihydroxybenzoate) catabolism. Catalyzes the reversible decarboxylation of gamma-resorcylate to resorcinol. Also catalyzes the decarboxylation of 2,3-dihydroxybenzoate to catechol, but does not act on 2-hydroxybenzoic acid 3-hydroxybenzoic acid, 4-hydroxybenzoic acid, 3,4-dihydroxybenzoic acid, 2,5-dihydroxybenzoic acid, 2,3,4-trihydroxybenzoic acid, 3,4,5-trihydroxybenzoic acid, 4-aminobenzoic acid, o-hydroxyphenylacetic acid and vanillic acid. Resorcinol and catechol can both be carboxylated by the reverse reaction. The chain is Gamma-resorcylate decarboxylase from Rhizobium radiobacter (Agrobacterium tumefaciens).